The following is a 252-amino-acid chain: ATP synthase subunit a (252 aa).

Transmembrane regions (helical) follow at residues 29–49, 87–107, 117–137, 146–166, 188–208, and 211–231; these read FTNSALFMVATVVVAAAFLFL, FFPLVFSLFMFVLVANLLGLF, IIVTFGLAILVIGTVIVYGFM, LFVPKGVPLVMMVLVVPIEVI, ITLKVFSGFVVSLSALGAVGV, and SILPLAMAVALTALELLVAFL.

The protein belongs to the ATPase A chain family. In terms of assembly, F-type ATPases have 2 components, CF(1) - the catalytic core - and CF(0) - the membrane proton channel. CF(1) has five subunits: alpha(3), beta(3), gamma(1), delta(1), epsilon(1). CF(0) has three main subunits: a(1), b(2) and c(9-12). The alpha and beta chains form an alternating ring which encloses part of the gamma chain. CF(1) is attached to CF(0) by a central stalk formed by the gamma and epsilon chains, while a peripheral stalk is formed by the delta and b chains.

The protein resides in the cell inner membrane. In terms of biological role, key component of the proton channel; it plays a direct role in the translocation of protons across the membrane. In Mesorhizobium japonicum (strain LMG 29417 / CECT 9101 / MAFF 303099) (Mesorhizobium loti (strain MAFF 303099)), this protein is ATP synthase subunit a.